Reading from the N-terminus, the 527-residue chain is Catalase (527 aa).

Positions Met-1–Gln-22 are enriched in basic and acidic residues. The disordered stretch occupies residues Met-1 to Gly-32. Ala-2 is modified (N-acetylalanine). Ser-9 carries the post-translational modification Phosphoserine. Lys-13 bears the N6-succinyllysine mark. Catalysis depends on residues His-75 and Asn-148. NADP(+)-binding residues include His-194, Ser-201, Arg-203, and Asn-213. The residue at position 221 (Lys-221) is an N6-succinyllysine. Lys-233 bears the N6-acetyllysine mark. Positions 237, 303, 305, and 306 each coordinate NADP(+). Position 306 is an N6-acetyllysine; alternate (Lys-306). Lys-306 carries the N6-succinyllysine; alternate modification. Tyr-358 serves as a coordination point for heme. Position 434 is a phosphoserine (Ser-434). An N6-acetyllysine; alternate modification is found at Lys-480. At Lys-480 the chain carries N6-succinyllysine; alternate. Lys-499 bears the N6-acetyllysine mark. Thr-511 bears the Phosphothreonine mark. Ser-517 carries the phosphoserine modification. Position 522 is an N6-succinyllysine (Lys-522). Residues Lys-524 to Leu-527 carry the Microbody targeting signal; atypical motif.

Belongs to the catalase family. Homotetramer. Interacts (via microbody targeting signal) with PEX5, monomeric form interacts with PEX5, leading to its translocation into peroxisomes. Heme serves as cofactor. NADP(+) is required as a cofactor.

The protein localises to the peroxisome matrix. The catalysed reaction is 2 H2O2 = O2 + 2 H2O. In terms of biological role, catalyzes the degradation of hydrogen peroxide (H(2)O(2)) generated by peroxisomal oxidases to water and oxygen, thereby protecting cells from the toxic effects of hydrogen peroxide. Promotes growth of cells including T-cells, B-cells, myeloid leukemia cells, melanoma cells, mastocytoma cells and normal and transformed fibroblast cells. The chain is Catalase (CAT) from Cavia porcellus (Guinea pig).